Reading from the N-terminus, the 95-residue chain is UPF0358 protein BA_4159/GBAA_4159/BAS3861 (95 aa).

The protein belongs to the UPF0358 family.

The polypeptide is UPF0358 protein BA_4159/GBAA_4159/BAS3861 (Bacillus anthracis).